Reading from the N-terminus, the 232-residue chain is Phosphatidylserine decarboxylase proenzyme (232 aa).

Ser190 (schiff-base intermediate with substrate; via pyruvic acid) is an active-site residue. Ser190 is subject to Pyruvic acid (Ser); by autocatalysis.

It belongs to the phosphatidylserine decarboxylase family. PSD-A subfamily. In terms of assembly, heterodimer of a large membrane-associated beta subunit and a small pyruvoyl-containing alpha subunit. It depends on pyruvate as a cofactor. In terms of processing, is synthesized initially as an inactive proenzyme. Formation of the active enzyme involves a self-maturation process in which the active site pyruvoyl group is generated from an internal serine residue via an autocatalytic post-translational modification. Two non-identical subunits are generated from the proenzyme in this reaction, and the pyruvate is formed at the N-terminus of the alpha chain, which is derived from the carboxyl end of the proenzyme. The post-translation cleavage follows an unusual pathway, termed non-hydrolytic serinolysis, in which the side chain hydroxyl group of the serine supplies its oxygen atom to form the C-terminus of the beta chain, while the remainder of the serine residue undergoes an oxidative deamination to produce ammonia and the pyruvoyl prosthetic group on the alpha chain.

The protein localises to the cell membrane. The enzyme catalyses a 1,2-diacyl-sn-glycero-3-phospho-L-serine + H(+) = a 1,2-diacyl-sn-glycero-3-phosphoethanolamine + CO2. It functions in the pathway phospholipid metabolism; phosphatidylethanolamine biosynthesis; phosphatidylethanolamine from CDP-diacylglycerol: step 2/2. Functionally, catalyzes the formation of phosphatidylethanolamine (PtdEtn) from phosphatidylserine (PtdSer). This is Phosphatidylserine decarboxylase proenzyme from Rhizobium etli (strain CIAT 652).